We begin with the raw amino-acid sequence, 447 residues long: UPF0210 protein LSL_0162 (447 aa).

The protein belongs to the UPF0210 family. As to quaternary structure, homodimer.

In Ligilactobacillus salivarius (strain UCC118) (Lactobacillus salivarius), this protein is UPF0210 protein LSL_0162.